The primary structure comprises 113 residues: Beta-defensin 112 (113 aa).

3 cysteine pairs are disulfide-bonded: C54/C82, C61/C75, and C65/C83.

It belongs to the beta-defensin family.

It localises to the secreted. Its function is as follows. Has antibacterial activity. In Pan troglodytes (Chimpanzee), this protein is Beta-defensin 112 (DEFB112).